Reading from the N-terminus, the 490-residue chain is Glutamyl-tRNA(Gln) amidotransferase subunit A (490 aa).

Active-site charge relay system residues include Lys-78 and Ser-153. Ser-177 functions as the Acyl-ester intermediate in the catalytic mechanism.

Belongs to the amidase family. GatA subfamily. In terms of assembly, heterotrimer of A, B and C subunits.

It carries out the reaction L-glutamyl-tRNA(Gln) + L-glutamine + ATP + H2O = L-glutaminyl-tRNA(Gln) + L-glutamate + ADP + phosphate + H(+). Functionally, allows the formation of correctly charged Gln-tRNA(Gln) through the transamidation of misacylated Glu-tRNA(Gln) in organisms which lack glutaminyl-tRNA synthetase. The reaction takes place in the presence of glutamine and ATP through an activated gamma-phospho-Glu-tRNA(Gln). This Bdellovibrio bacteriovorus (strain ATCC 15356 / DSM 50701 / NCIMB 9529 / HD100) protein is Glutamyl-tRNA(Gln) amidotransferase subunit A.